Here is a 127-residue protein sequence, read N- to C-terminus: Large ribosomal subunit protein bL12 (127 aa).

Belongs to the bacterial ribosomal protein bL12 family. As to quaternary structure, homodimer. Part of the ribosomal stalk of the 50S ribosomal subunit. Forms a multimeric L10(L12)X complex, where L10 forms an elongated spine to which 2 to 4 L12 dimers bind in a sequential fashion. Binds GTP-bound translation factors.

In terms of biological role, forms part of the ribosomal stalk which helps the ribosome interact with GTP-bound translation factors. Is thus essential for accurate translation. The protein is Large ribosomal subunit protein bL12 of Acidiphilium cryptum (strain JF-5).